The sequence spans 361 residues: Chorismate synthase (361 aa).

The NADP(+) site is built by R48 and R54. FMN-binding positions include 125–127, 238–239, G278, 293–297, and R319; these read RSS, NA, and KPTSS.

This sequence belongs to the chorismate synthase family. Homotetramer. It depends on FMNH2 as a cofactor.

The catalysed reaction is 5-O-(1-carboxyvinyl)-3-phosphoshikimate = chorismate + phosphate. It functions in the pathway metabolic intermediate biosynthesis; chorismate biosynthesis; chorismate from D-erythrose 4-phosphate and phosphoenolpyruvate: step 7/7. In terms of biological role, catalyzes the anti-1,4-elimination of the C-3 phosphate and the C-6 proR hydrogen from 5-enolpyruvylshikimate-3-phosphate (EPSP) to yield chorismate, which is the branch point compound that serves as the starting substrate for the three terminal pathways of aromatic amino acid biosynthesis. This reaction introduces a second double bond into the aromatic ring system. This is Chorismate synthase from Shigella boydii serotype 18 (strain CDC 3083-94 / BS512).